Here is a 196-residue protein sequence, read N- to C-terminus: Carnitine operon protein CaiE (196 aa).

Residues 173–196 (TQPLRQMEENRPRLQGTTDVTPKR) are disordered. Polar residues predominate over residues 187-196 (QGTTDVTPKR).

It belongs to the transferase hexapeptide repeat family.

The protein operates within amine and polyamine metabolism; carnitine metabolism. Overproduction of CaiE stimulates the activity of CaiB and CaiD. This Escherichia coli O7:K1 (strain IAI39 / ExPEC) protein is Carnitine operon protein CaiE.